Here is a 292-residue protein sequence, read N- to C-terminus: Ribosomal protein L11 methyltransferase (292 aa).

The S-adenosyl-L-methionine site is built by threonine 138, glycine 159, aspartate 181, and asparagine 225.

Belongs to the methyltransferase superfamily. PrmA family.

The protein localises to the cytoplasm. It catalyses the reaction L-lysyl-[protein] + 3 S-adenosyl-L-methionine = N(6),N(6),N(6)-trimethyl-L-lysyl-[protein] + 3 S-adenosyl-L-homocysteine + 3 H(+). Functionally, methylates ribosomal protein L11. The chain is Ribosomal protein L11 methyltransferase from Leuconostoc citreum (strain KM20).